We begin with the raw amino-acid sequence, 285 residues long: Probable endonuclease 4 (285 aa).

Zn(2+) is bound by residues histidine 69, histidine 109, glutamate 145, aspartate 179, histidine 182, histidine 216, aspartate 229, histidine 231, and glutamate 261.

Belongs to the AP endonuclease 2 family. Zn(2+) serves as cofactor.

The catalysed reaction is Endonucleolytic cleavage to 5'-phosphooligonucleotide end-products.. Endonuclease IV plays a role in DNA repair. It cleaves phosphodiester bonds at apurinic or apyrimidinic (AP) sites, generating a 3'-hydroxyl group and a 5'-terminal sugar phosphate. This Salmonella paratyphi A (strain AKU_12601) protein is Probable endonuclease 4.